Reading from the N-terminus, the 447-residue chain is Probable glycine dehydrogenase (decarboxylating) subunit 1 (447 aa).

It belongs to the GcvP family. N-terminal subunit subfamily. As to quaternary structure, the glycine cleavage system is composed of four proteins: P, T, L and H. In this organism, the P 'protein' is a heterodimer of two subunits.

The catalysed reaction is N(6)-[(R)-lipoyl]-L-lysyl-[glycine-cleavage complex H protein] + glycine + H(+) = N(6)-[(R)-S(8)-aminomethyldihydrolipoyl]-L-lysyl-[glycine-cleavage complex H protein] + CO2. Its function is as follows. The glycine cleavage system catalyzes the degradation of glycine. The P protein binds the alpha-amino group of glycine through its pyridoxal phosphate cofactor; CO(2) is released and the remaining methylamine moiety is then transferred to the lipoamide cofactor of the H protein. This Bacillus cytotoxicus (strain DSM 22905 / CIP 110041 / 391-98 / NVH 391-98) protein is Probable glycine dehydrogenase (decarboxylating) subunit 1.